Here is a 527-residue protein sequence, read N- to C-terminus: MEVAMVCTRVNLLILILSLCSPYKFIQSPMDFGPLNLLPTTTTASSDFGRILFHSPSAVLKPQAPRDISLLLSFLSASPLGKVTVAARGAGHSIHGQAQALDGIVVEMSSLPSEIEFYRRGEGDVSYADVGGGIMWIELLEQSLKLGLAPRSWTDYLYLTIGGTLSNAGISGQTFKHGPQISNVLQLEVVTGRGEIVTCSPTKDAELFNAVLGGLGQFGIITRARILLQEAPQKVKWVRAFYDDFATFTKDQELLVSMPVLVDYVEGFIVLNEQSLHSSSIAFPTNVDFNPDFGTKNNPKIYYCIEFAVHDYQNKNINVEQVVEVISRQMSHIASHLYSVEVSYFDFLNRVRMEEMSLRNSGLWEVHHPWLNMFVPSAGISDFRDLLMDSISPDNFEGLILIYPLLRHKWDTNTSVVLPDSGSTDQVMYAVGILRSANPDDGCSHHCLQELLLRHRRLAGAAASGLGAKQYLAHHPTPAGWRRHFGRRWERFADRKARFDPRCILGPGQGIFPRDSSSSNGAFASYS.

Residues 1–22 form the signal peptide; sequence MEVAMVCTRVNLLILILSLCSP. Residues 52 to 231 form the FAD-binding PCMH-type domain; the sequence is LFHSPSAVLK…TRARILLQEA (180 aa). Ala-87, Gly-89, and Gly-91 together coordinate FAD. Pros-8alpha-FAD histidine is present on His-92. The FAD site is built by Ser-93, Gln-97, Asp-155, Thr-160, Ser-166, Ile-170, and Ile-221. A glycan (N-linked (GlcNAc...) asparagine) is linked at Asn-413. 2 residues coordinate FAD: Tyr-471 and Gln-509.

This sequence belongs to the oxygen-dependent FAD-linked oxidoreductase family. In terms of assembly, monomer. It depends on FAD as a cofactor. Expressed in inflorescence meristems. Highly expressed in lamina joints, and mainly in the parenchyma cells and vascular bundles on the abaxial side of the lamina joint. Expressed in roots, stems, leaves and young panicles.

The protein resides in the endoplasmic reticulum. The catalysed reaction is N(6)-dimethylallyladenine + A + H2O = 3-methyl-2-butenal + adenine + AH2. Its function is as follows. Catalyzes the oxidation of cytokinins, a family of N(6)-substituted adenine derivatives, where the substituent is an isopentenyl group. Cytokinins are plant hormones essential for plant growth, development, and stress responses. Exhibits specific activities toward trans-zeatin (tZ) and isopentenyladenine (iP). Plays a role in lamina joint inclination. Regulates cell proliferation and vascular bundle number on the abaxial side of lamina joint. In Oryza sativa subsp. japonica (Rice), this protein is Cytokinin dehydrogenase 3.